The sequence spans 275 residues: NAD kinase (275 aa).

Catalysis depends on aspartate 68, which acts as the Proton acceptor. NAD(+) is bound by residues 68–69 (DG), arginine 73, 136–137 (NE), lysine 147, arginine 164, aspartate 166, 177–182 (TAYAMS), alanine 201, and glutamine 236.

The protein belongs to the NAD kinase family. A divalent metal cation is required as a cofactor.

Its subcellular location is the cytoplasm. The catalysed reaction is NAD(+) + ATP = ADP + NADP(+) + H(+). Its function is as follows. Involved in the regulation of the intracellular balance of NAD and NADP, and is a key enzyme in the biosynthesis of NADP. Catalyzes specifically the phosphorylation on 2'-hydroxyl of the adenosine moiety of NAD to yield NADP. In Methanosarcina barkeri (strain Fusaro / DSM 804), this protein is NAD kinase.